A 91-amino-acid polypeptide reads, in one-letter code: Bacterial microcompartment shell vertex protein PduN (91 aa).

Residues 1 to 87 (MHLARVTGAV…IDLAVVGIVD (87 aa)) form the BMV domain.

It belongs to the CcmL/EutN family. Homopentamer. Interacts with shell protein PduA.

The protein resides in the bacterial microcompartment. It participates in polyol metabolism; 1,2-propanediol degradation. In terms of biological role, probably forms vertices in the shell of the bacterial microcompartment (BMC) dedicated to 1,2-propanediol (1,2-PD) degradation. Required for structural integrity of BMCs and to mitigate propionaldehyde toxicity. Its function is as follows. The 1,2-PD-specific bacterial microcompartment (BMC) concentrates low levels of 1,2-PD catabolic enzymes, concentrates volatile reaction intermediates thus enhancing pathway flux and keeps the level of toxic, mutagenic propionaldehyde low. In Salmonella typhimurium (strain LT2 / SGSC1412 / ATCC 700720), this protein is Bacterial microcompartment shell vertex protein PduN.